A 251-amino-acid chain; its full sequence is Triosephosphate isomerase (251 aa).

Residue 9-11 (NWK) coordinates substrate. Residue histidine 95 is the Electrophile of the active site. The Proton acceptor role is filled by glutamate 167. Residues glycine 173, serine 213, and 234-235 (GG) contribute to the substrate site.

Belongs to the triosephosphate isomerase family. In terms of assembly, homodimer.

It is found in the cytoplasm. It carries out the reaction D-glyceraldehyde 3-phosphate = dihydroxyacetone phosphate. It participates in carbohydrate biosynthesis; gluconeogenesis. It functions in the pathway carbohydrate degradation; glycolysis; D-glyceraldehyde 3-phosphate from glycerone phosphate: step 1/1. Functionally, involved in the gluconeogenesis. Catalyzes stereospecifically the conversion of dihydroxyacetone phosphate (DHAP) to D-glyceraldehyde-3-phosphate (G3P). This chain is Triosephosphate isomerase, found in Trichlorobacter lovleyi (strain ATCC BAA-1151 / DSM 17278 / SZ) (Geobacter lovleyi).